A 137-amino-acid polypeptide reads, in one-letter code: Large ribosomal subunit protein uL16 (137 aa).

Belongs to the universal ribosomal protein uL16 family. As to quaternary structure, part of the 50S ribosomal subunit.

Its function is as follows. Binds 23S rRNA and is also seen to make contacts with the A and possibly P site tRNAs. The sequence is that of Large ribosomal subunit protein uL16 from Alcanivorax borkumensis (strain ATCC 700651 / DSM 11573 / NCIMB 13689 / SK2).